The following is a 196-amino-acid chain: Dephospho-CoA kinase (196 aa).

The 191-residue stretch at Ala6–Leu196 folds into the DPCK domain. Gly14–Thr19 provides a ligand contact to ATP.

Belongs to the CoaE family.

Its subcellular location is the cytoplasm. It catalyses the reaction 3'-dephospho-CoA + ATP = ADP + CoA + H(+). It functions in the pathway cofactor biosynthesis; coenzyme A biosynthesis; CoA from (R)-pantothenate: step 5/5. Functionally, catalyzes the phosphorylation of the 3'-hydroxyl group of dephosphocoenzyme A to form coenzyme A. The sequence is that of Dephospho-CoA kinase from Helicobacter pylori (strain J99 / ATCC 700824) (Campylobacter pylori J99).